Consider the following 48-residue polypeptide: U1-theraphotoxin-Agm1a (48 aa).

3 disulfide bridges follow: Cys-4–Cys-34, Cys-8–Cys-40, and Cys-22–Cys-45. Met-44 bears the Methionine sulfoxide; partial mark.

Belongs to the neurotoxin 12 (Hwtx-2) family. 01 (Ap1a) subfamily. Expressed by the venom gland.

It is found in the secreted. In terms of biological role, is toxic to both insects and mammals. Induces reversible paralysis when injected into S.frugiperda larvae. Reduces both the amplitude and frequency of responses from muscle (GF-TTM and GF-DLM) pathways in the D.melanogaster giant fiber circuit, suggesting an action at the neuromuscular junction, which is mediated by glutamatergic receptors. In mice, intracranial injection of 30 ug causes increased urination, myoclonus, hypermotility with circular movements followed by respiratory and generalized seizures resulting in death within 25-35 minutes of injection. In Acanthoscurria gomesiana (Tarantula spider), this protein is U1-theraphotoxin-Agm1a.